Reading from the N-terminus, the 316-residue chain is Methionyl-tRNA formyltransferase (316 aa).

Ser-111–Pro-114 provides a ligand contact to (6S)-5,6,7,8-tetrahydrofolate.

This sequence belongs to the Fmt family.

It catalyses the reaction L-methionyl-tRNA(fMet) + (6R)-10-formyltetrahydrofolate = N-formyl-L-methionyl-tRNA(fMet) + (6S)-5,6,7,8-tetrahydrofolate + H(+). Attaches a formyl group to the free amino group of methionyl-tRNA(fMet). The formyl group appears to play a dual role in the initiator identity of N-formylmethionyl-tRNA by promoting its recognition by IF2 and preventing the misappropriation of this tRNA by the elongation apparatus. This chain is Methionyl-tRNA formyltransferase, found in Limosilactobacillus fermentum (strain NBRC 3956 / LMG 18251) (Lactobacillus fermentum).